The primary structure comprises 468 residues: Microtubule-associated tyrosine carboxypeptidase 1 (468 aa).

Polar residues predominate over residues 1–10 (MVLDSGTQVY). Disordered regions lie at residues 1–39 (MVLD…PPLY) and 77–112 (MKRS…TLRP). His-277 contributes to the Zn(2+) binding site. The active-site Nucleophile is Glu-278. His-282 and Glu-313 together coordinate Zn(2+).

It belongs to the peptidase MATCAP family. Zn(2+) serves as cofactor.

It is found in the cytoplasm. The protein resides in the cytoskeleton. It carries out the reaction C-terminal L-alpha-aminoacyl-L-glutamyl-L-glutamyl-L-tyrosyl-[tubulin] + H2O = C-terminal L-alpha-aminoacyl-L-glutamyl-L-glutamyl-[tubulin] + L-tyrosine. The enzyme catalyses C-terminal L-alpha-aminoacyl-L-glutamyl-L-glutamyl-L-phenylalanyl-[tubulin] + H2O = C-terminal L-alpha-aminoacyl-L-glutamyl-L-glutamyl-[tubulin] + L-phenylalanine. Its function is as follows. Tyrosine carboxypeptidase that removes the C-terminal tyrosine residue of alpha-tubulin, thereby regulating microtubule dynamics and function. Also able to remove the C-terminal phenylalanine residue of alpha-tubulin TUBA8. Recognizes adjacent tubulin dimers along the same protofilament. This Rattus norvegicus (Rat) protein is Microtubule-associated tyrosine carboxypeptidase 1.